A 465-amino-acid polypeptide reads, in one-letter code: Asparagine--tRNA ligase (465 aa).

It belongs to the class-II aminoacyl-tRNA synthetase family. As to quaternary structure, homodimer.

The protein localises to the cytoplasm. The catalysed reaction is tRNA(Asn) + L-asparagine + ATP = L-asparaginyl-tRNA(Asn) + AMP + diphosphate + H(+). The sequence is that of Asparagine--tRNA ligase from Clostridium perfringens (strain ATCC 13124 / DSM 756 / JCM 1290 / NCIMB 6125 / NCTC 8237 / Type A).